The chain runs to 182 residues: Ribulose bisphosphate carboxylase small subunit, chloroplastic 3 (182 aa).

Residues 1–41 (MASIMMNKSVVLSKECAKPLASPKVTLNKRGFATTIATKNR) constitute a chloroplast transit peptide.

Belongs to the RuBisCO small chain family. In terms of assembly, heterohexadecamer of 8 large and 8 small subunits.

It is found in the plastid. The protein localises to the chloroplast. RuBisCO catalyzes two reactions: the carboxylation of D-ribulose 1,5-bisphosphate, the primary event in carbon dioxide fixation, as well as the oxidative fragmentation of the pentose substrate. Both reactions occur simultaneously and in competition at the same active site. Although the small subunit is not catalytic it is essential for maximal activity. The protein is Ribulose bisphosphate carboxylase small subunit, chloroplastic 3 of Acetabularia acetabulum (Mermaid's wine glass).